The following is a 232-amino-acid chain: Chaperone protein CssC (232 aa).

An N-terminal signal peptide occupies residues 1 to 20; the sequence is MKSKLIILLTLVPFSSFSTG.

This sequence belongs to the periplasmic pilus chaperone family.

The protein resides in the periplasm. In terms of biological role, involved in the biogenesis of the CS6 fimbria. The protein is Chaperone protein CssC (cssC) of Escherichia coli.